Here is a 305-residue protein sequence, read N- to C-terminus: Mycothiol acetyltransferase (305 aa).

N-acetyltransferase domains follow at residues 10–154 and 156–305; these read DRLD…VVLE and ISLR…YARA. E38 contributes to the 1D-myo-inositol 2-(L-cysteinylamino)-2-deoxy-alpha-D-glucopyranoside binding site. 82–84 contributes to the acetyl-CoA binding site; the sequence is LAV. 3 residues coordinate 1D-myo-inositol 2-(L-cysteinylamino)-2-deoxy-alpha-D-glucopyranoside: E183, K225, and E238. Residues 242 to 244 and 249 to 255 contribute to the acetyl-CoA site; these read VAI and QGRGLGR. Y276 is a 1D-myo-inositol 2-(L-cysteinylamino)-2-deoxy-alpha-D-glucopyranoside binding site. 281–286 is an acetyl-CoA binding site; that stretch reads NASALH.

Belongs to the acetyltransferase family. MshD subfamily. Monomer.

It catalyses the reaction 1D-myo-inositol 2-(L-cysteinylamino)-2-deoxy-alpha-D-glucopyranoside + acetyl-CoA = mycothiol + CoA + H(+). Catalyzes the transfer of acetyl from acetyl-CoA to desacetylmycothiol (Cys-GlcN-Ins) to form mycothiol. The sequence is that of Mycothiol acetyltransferase from Rhodococcus opacus (strain B4).